A 345-amino-acid polypeptide reads, in one-letter code: Phosphoribosylformylglycinamidine cyclo-ligase (345 aa).

Belongs to the AIR synthase family.

It localises to the cytoplasm. The enzyme catalyses 2-formamido-N(1)-(5-O-phospho-beta-D-ribosyl)acetamidine + ATP = 5-amino-1-(5-phospho-beta-D-ribosyl)imidazole + ADP + phosphate + H(+). Its pathway is purine metabolism; IMP biosynthesis via de novo pathway; 5-amino-1-(5-phospho-D-ribosyl)imidazole from N(2)-formyl-N(1)-(5-phospho-D-ribosyl)glycinamide: step 2/2. In Shewanella woodyi (strain ATCC 51908 / MS32), this protein is Phosphoribosylformylglycinamidine cyclo-ligase.